A 492-amino-acid polypeptide reads, in one-letter code: Ketol-acid reductoisomerase (NADP(+)) (492 aa).

Residues 15–208 (AQLGKCRFMA…GGHRAGVLES (194 aa)) form the KARI N-terminal Rossmann domain. Residues 45-48 (CGAQ), R68, R76, S78, and 108-110 (DKQ) each bind NADP(+). The active site involves H132. Residue G158 participates in NADP(+) binding. 2 consecutive KARI C-terminal knotted domains span residues 209-344 (SFVA…NAPQ) and 345-485 (FEGK…MTDM). Mg(2+) is bound by residues D217, E221, E389, and E393. S414 serves as a coordination point for substrate.

It belongs to the ketol-acid reductoisomerase family. It depends on Mg(2+) as a cofactor.

It catalyses the reaction (2R)-2,3-dihydroxy-3-methylbutanoate + NADP(+) = (2S)-2-acetolactate + NADPH + H(+). The enzyme catalyses (2R,3R)-2,3-dihydroxy-3-methylpentanoate + NADP(+) = (S)-2-ethyl-2-hydroxy-3-oxobutanoate + NADPH + H(+). The protein operates within amino-acid biosynthesis; L-isoleucine biosynthesis; L-isoleucine from 2-oxobutanoate: step 2/4. Its pathway is amino-acid biosynthesis; L-valine biosynthesis; L-valine from pyruvate: step 2/4. Its function is as follows. Involved in the biosynthesis of branched-chain amino acids (BCAA). Catalyzes an alkyl-migration followed by a ketol-acid reduction of (S)-2-acetolactate (S2AL) to yield (R)-2,3-dihydroxy-isovalerate. In the isomerase reaction, S2AL is rearranged via a Mg-dependent methyl migration to produce 3-hydroxy-3-methyl-2-ketobutyrate (HMKB). In the reductase reaction, this 2-ketoacid undergoes a metal-dependent reduction by NADPH to yield (R)-2,3-dihydroxy-isovalerate. The polypeptide is Ketol-acid reductoisomerase (NADP(+)) (Yersinia enterocolitica serotype O:8 / biotype 1B (strain NCTC 13174 / 8081)).